The following is a 169-amino-acid chain: Macro domain-containing protein SCO6450 (169 aa).

Residues 1 to 169 enclose the Macro domain; that stretch reads MTGITLVQGD…AYEAFAARLG (169 aa).

Belongs to the MacroD-type family.

This is Macro domain-containing protein SCO6450 from Streptomyces coelicolor (strain ATCC BAA-471 / A3(2) / M145).